The sequence spans 353 residues: Outer membrane protein P5 (353 aa).

Residues 1-21 (MKKTAIALVVAGLAAASVAQA) form the signal peptide. The next 8 membrane-spanning stretches (beta stranded) occupy residues 27–37 (TFYAGVKAGQA), 58–69 (SFTYGVFGGYQI), 77–85 (LAVELGYDD), 104–115 (HGAHLSLKGSYE), 120–128 (LDVYGKAGV), 158–167 (GLFAVGAEYA), 172–179 (LAVRLEYQ), and 205–213 (SINAGISYR). In terms of domain architecture, OmpA-like spans 227–353 (VVSKTFSLNS…RVEIAVNGTK (127 aa)). A disulfide bridge connects residues Cys-326 and Cys-338.

Belongs to the outer membrane OOP (TC 1.B.6) superfamily. OmpA family. As to quaternary structure, monomer and homodimer.

Its subcellular location is the cell outer membrane. Its function is as follows. With TolR probably plays a role in maintaining the position of the peptidoglycan cell wall in the periplasm. Acts as a porin with low permeability that allows slow penetration of small solutes; an internal gate slows down solute passage. The chain is Outer membrane protein P5 from Haemophilus influenzae.